The chain runs to 239 residues: Purine nucleoside phosphorylase DeoD-type 1 (239 aa).

Residue H5 participates in a purine D-ribonucleoside binding. Residues G21, R25, R44, and 88 to 91 (RVGS) each bind phosphate. A purine D-ribonucleoside is bound by residues 180–182 (EME) and 204–205 (SD). The Proton donor role is filled by D205.

It belongs to the PNP/UDP phosphorylase family. In terms of assembly, homohexamer; trimer of homodimers.

It catalyses the reaction a purine D-ribonucleoside + phosphate = a purine nucleobase + alpha-D-ribose 1-phosphate. The catalysed reaction is a purine 2'-deoxy-D-ribonucleoside + phosphate = a purine nucleobase + 2-deoxy-alpha-D-ribose 1-phosphate. In terms of biological role, catalyzes the reversible phosphorolytic breakdown of the N-glycosidic bond in the beta-(deoxy)ribonucleoside molecules, with the formation of the corresponding free purine bases and pentose-1-phosphate. This is Purine nucleoside phosphorylase DeoD-type 1 from Vibrio parahaemolyticus serotype O3:K6 (strain RIMD 2210633).